Here is a 187-residue protein sequence, read N- to C-terminus: Cytochrome b-245 chaperone 1 (187 aa).

The helical transmembrane segment at 20 to 42 (GIRSWSLLVGILSIGLAAAYYSG) threads the bilayer. Residue Ser168 is modified to Phosphoserine.

This sequence belongs to the CYBC1 family. In terms of assembly, interacts with CYBB; CYBC1 may act as a chaperone stabilizing Cytochrome b-245 heterodimer. As to expression, highly expressed in macrophages, neutrophils and monocytes.

Its subcellular location is the endoplasmic reticulum membrane. Functions as a chaperone necessary for a stable expression of the CYBA and CYBB subunits of the cytochrome b-245 heterodimer. Controls the phagocyte respiratory burst and is essential for innate immunity. This Homo sapiens (Human) protein is Cytochrome b-245 chaperone 1.